An 83-amino-acid polypeptide reads, in one-letter code: Protein ShK-like4 (83 aa).

Residues 1–21 form the signal peptide; the sequence is MDTRVIAVLFVAIMVLSSTNA. Residues 22-48 constitute a propeptide that is removed on maturation; sequence LPKQKGSYKNMNHADFLKGLDRASSKR. Disulfide bonds link C50/C82, C57/C75, and C67/C79. The region spanning 50 to 83 is the ShKT domain; sequence CRDSHWSCFFQSNYEDICSTAQAEECALSCGLCE.

Contains 3 disulfide bonds. Expressed in various neurons (ectodermal sensory cells) (in planulae and primary polyps). Not expressed in nematocytes.

Its function is as follows. Probable neuropeptide. The sequence is that of Protein ShK-like4 from Nematostella vectensis (Starlet sea anemone).